A 244-amino-acid chain; its full sequence is Protein DCG1 (244 aa).

This sequence belongs to the HyuE racemase family.

The sequence is that of Protein DCG1 (DCG1) from Saccharomyces cerevisiae (strain ATCC 204508 / S288c) (Baker's yeast).